Consider the following 762-residue polypeptide: Multifunctional tryptophan biosynthesis protein (762 aa).

Residues 25–224 form the Glutamine amidotransferase type-1 domain; it reads NLILIDNYDS…LHMQGGTWAE (200 aa). Position 76 to 78 (76 to 78) interacts with L-glutamine; the sequence is GPG. Residue Cys-104 is the Nucleophile; for GATase activity of the active site. L-glutamine contacts are provided by residues Gln-108 and 154–155; that span reads SL. Catalysis depends on for GATase activity residues His-198 and Glu-200. An indole-3-glycerol phosphate synthase region spans residues 251–515; it reads ILQKIYAHRK…DATQFIRELC (265 aa). The interval 531–762 is N-(5'-phosphoribosyl)anthranilate isomerase; that stretch reads LVKICGTRSA…EFVKAAKSVR (232 aa).

In terms of assembly, tetramer of two components I and two components II.

It carries out the reaction chorismate + L-glutamine = anthranilate + pyruvate + L-glutamate + H(+). It catalyses the reaction N-(5-phospho-beta-D-ribosyl)anthranilate = 1-(2-carboxyphenylamino)-1-deoxy-D-ribulose 5-phosphate. The enzyme catalyses 1-(2-carboxyphenylamino)-1-deoxy-D-ribulose 5-phosphate + H(+) = (1S,2R)-1-C-(indol-3-yl)glycerol 3-phosphate + CO2 + H2O. It functions in the pathway amino-acid biosynthesis; L-tryptophan biosynthesis; L-tryptophan from chorismate: step 1/5. It participates in amino-acid biosynthesis; L-tryptophan biosynthesis; L-tryptophan from chorismate: step 3/5. Its pathway is amino-acid biosynthesis; L-tryptophan biosynthesis; L-tryptophan from chorismate: step 4/5. Functionally, trifunctional enzyme bearing the Gln amidotransferase (GATase) domain of anthranilate synthase, indole-glycerolphosphate synthase, and phosphoribosylanthranilate isomerase activities. The sequence is that of Multifunctional tryptophan biosynthesis protein (trp-1) from Neurospora crassa (strain ATCC 24698 / 74-OR23-1A / CBS 708.71 / DSM 1257 / FGSC 987).